A 442-amino-acid polypeptide reads, in one-letter code: Alpha-1,6-mannosyl-glycoprotein 2-beta-N-acetylglucosaminyltransferase (442 aa).

The Cytoplasmic portion of the chain corresponds to 1 to 9 (MRFRIYKRK). The chain crosses the membrane as a helical; Signal-anchor for type II membrane protein span at residues 10–29 (VLILTLVVAACGFVLWSSNG). The Lumenal segment spans residues 30-442 (RQRKNDALAP…ELCKSYRRLQ (413 aa)). N-linked (GlcNAc...) asparagine glycosylation is found at N64 and N81. Substrate contacts are provided by residues 118–122 (QVHNR) and D149. Residues C191 and C205 are joined by a disulfide bond. Residue 224 to 228 (QTKHH) participates in substrate binding. D256 contributes to the Mn(2+) binding site. The cysteines at positions 278 and 281 are disulfide-linked. Substrate is bound at residue R293. 3 disulfides stabilise this stretch: C329–C352, C334–C435, and C373–C381. H369 contributes to the Mn(2+) binding site.

This sequence belongs to the glycosyltransferase 16 (GT16) protein family. As to quaternary structure, homodimer. Mn(2+) serves as cofactor. In terms of tissue distribution, detected in liver (at protein level). Detected in liver, brain, thymus and spleen.

The protein resides in the golgi apparatus membrane. The enzyme catalyses an N(4)-{beta-D-GlcNAc-(1-&gt;2)-alpha-D-Man-(1-&gt;3)-[alpha-D-Man-(1-&gt;6)]-beta-D-Man-(1-&gt;4)-beta-D-GlcNAc-(1-&gt;4)-beta-D-GlcNAc}-L-asparaginyl-[protein] + UDP-N-acetyl-alpha-D-glucosamine = N(4)-{beta-D-GlcNAc-(1-&gt;2)-alpha-D-Man-(1-&gt;3)-[beta-D-GlcNAc-(1-&gt;2)-alpha-D-Man-(1-&gt;6)]-beta-D-Man-(1-&gt;4)-beta-D-GlcNAc-(1-&gt;4)-beta-D-GlcNAc}-L-asparaginyl-[protein] + UDP + H(+). It participates in protein modification; protein glycosylation. Functionally, plays an essential role in protein N-glycosylation. Catalyzes the transfer of N-acetylglucosamine (GlcNAc) onto the free terminal mannose moiety in the core structure of the nascent N-linked glycan chain, giving rise to the second branch in complex glycans. This chain is Alpha-1,6-mannosyl-glycoprotein 2-beta-N-acetylglucosaminyltransferase (Mgat2), found in Rattus norvegicus (Rat).